Reading from the N-terminus, the 953-residue chain is Atromentin synthetase invA2 (953 aa).

An adenylation (A) domain region spans residues Arg38–Val460. One can recognise a Carrier domain in the interval Ala592 to Ile670. The tract at residues Thr597 to Asp667 is thiolation and peptide carrier (T) domain. Position 629 is an O-(pantetheine 4'-phosphoryl)serine (Ser629). The thioesterase (TE) domain stretch occupies residues Pro693–His795.

This sequence belongs to the ATP-dependent AMP-binding enzyme family.

It functions in the pathway secondary metabolite biosynthesis. In terms of biological role, an L-tyrosine:2-oxoglutarate aminotransferase (probably invD) and atromentin synthetase invA2 catalyze consecutive steps to turn over L-tyrosine into atromentin, which represents the generic precursor molecule for the entire terphenylquinone and pulvinic acid family of pigments, which are widely distributed secondary metabolites in homobasidiomycetes. The first step catalyzed by the aminotransferase converts L-tyrosine in to 4-hydroxyphenylpyruvate (4-HPP). Adenylation of two 4-HPP monomers by the invA2 adenylation (A) domain, covalent tethering of the monomers as a thioester and oxoester onto the invA2 thiolation (T) and thioesterase (TE) domains, respectively, and symmetric C-C-bond formation between two monomers catalyzed by the invA2 TE domain leads to atromentin. The chain is Atromentin synthetase invA2 (invA2) from Paxillus involutus (Naked brimcap).